We begin with the raw amino-acid sequence, 174 residues long: Peptide deformylase (174 aa).

Cysteine 94 and histidine 136 together coordinate Fe cation. Glutamate 137 is a catalytic residue. Residue histidine 140 coordinates Fe cation.

Belongs to the polypeptide deformylase family. Fe(2+) is required as a cofactor.

The enzyme catalyses N-terminal N-formyl-L-methionyl-[peptide] + H2O = N-terminal L-methionyl-[peptide] + formate. Functionally, removes the formyl group from the N-terminal Met of newly synthesized proteins. Requires at least a dipeptide for an efficient rate of reaction. N-terminal L-methionine is a prerequisite for activity but the enzyme has broad specificity at other positions. The protein is Peptide deformylase of Rhizobium meliloti (strain 1021) (Ensifer meliloti).